Consider the following 225-residue polypeptide: Ribose-5-phosphate isomerase A (225 aa).

Substrate-binding positions include 26-29 (TGST), 82-85 (DGAD), and 95-98 (KGGG). The Proton acceptor role is filled by Glu104. Lys122 contributes to the substrate binding site.

Belongs to the ribose 5-phosphate isomerase family. Homodimer.

The catalysed reaction is aldehydo-D-ribose 5-phosphate = D-ribulose 5-phosphate. It participates in carbohydrate degradation; pentose phosphate pathway; D-ribose 5-phosphate from D-ribulose 5-phosphate (non-oxidative stage): step 1/1. Catalyzes the reversible conversion of ribose-5-phosphate to ribulose 5-phosphate. The chain is Ribose-5-phosphate isomerase A from Streptococcus mutans serotype c (strain ATCC 700610 / UA159).